A 39-amino-acid polypeptide reads, in one-letter code: Natriuretic peptide TcNPa (39 aa).

A propeptide spanning residues 1–8 is cleaved from the precursor; that stretch reads SGSETAKI. C12 and C28 are joined by a disulfide. Residue T35 is glycosylated (O-linked (GalNAc...) threonine).

This sequence belongs to the natriuretic peptide family. Post-translationally, O-linked glycans consist of galactosyl-beta(1-3)-N-acetylgalactosamine (Gal-GalNAc). The synthetic non-glycosylated form shows higher potency on natriuretic receptors (EC(50)=672.90 nM) and NPR2 (EC(50)=261.0 nM). As to expression, expressed by the venom gland.

Its subcellular location is the secreted. Snake venom natriuretic peptide that targets both NPR1 (EC(50)=1080.0 nM) and NPR2 (EC(50)=328.60 nM). Exhibits hypotensive and vasodepressor activities. The protein is Natriuretic peptide TcNPa of Tropidechis carinatus (Australian rough-scaled snake).